The sequence spans 294 residues: Cytidine deaminase (294 aa).

2 consecutive CMP/dCMP-type deaminase domains span residues 48–168 (DEDA…FGPK) and 186–294 (LTGD…VLLG). Residue 89 to 91 (NME) participates in substrate binding. His-102 contributes to the Zn(2+) binding site. Glu-104 serves as the catalytic Proton donor. The Zn(2+) site is built by Cys-129 and Cys-132.

Belongs to the cytidine and deoxycytidylate deaminase family. As to quaternary structure, homodimer. Zn(2+) is required as a cofactor.

It carries out the reaction cytidine + H2O + H(+) = uridine + NH4(+). The enzyme catalyses 2'-deoxycytidine + H2O + H(+) = 2'-deoxyuridine + NH4(+). Its function is as follows. This enzyme scavenges exogenous and endogenous cytidine and 2'-deoxycytidine for UMP synthesis. This is Cytidine deaminase from Salmonella newport (strain SL254).